A 100-amino-acid chain; its full sequence is NAD(P)H-quinone oxidoreductase subunit 4L, chloroplastic (100 aa).

A run of 3 helical transmembrane segments spans residues 1–21 (MLEH…FGLI), 29–49 (ALMC…TFSN), and 60–80 (IFAI…LAIV).

The protein belongs to the complex I subunit 4L family. In terms of assembly, NDH is composed of at least 16 different subunits, 5 of which are encoded in the nucleus.

It localises to the plastid. The protein localises to the chloroplast thylakoid membrane. The catalysed reaction is a plastoquinone + NADH + (n+1) H(+)(in) = a plastoquinol + NAD(+) + n H(+)(out). The enzyme catalyses a plastoquinone + NADPH + (n+1) H(+)(in) = a plastoquinol + NADP(+) + n H(+)(out). In terms of biological role, NDH shuttles electrons from NAD(P)H:plastoquinone, via FMN and iron-sulfur (Fe-S) centers, to quinones in the photosynthetic chain and possibly in a chloroplast respiratory chain. The immediate electron acceptor for the enzyme in this species is believed to be plastoquinone. Couples the redox reaction to proton translocation, and thus conserves the redox energy in a proton gradient. The sequence is that of NAD(P)H-quinone oxidoreductase subunit 4L, chloroplastic from Physcomitrium patens (Spreading-leaved earth moss).